A 181-amino-acid chain; its full sequence is NADH-quinone oxidoreductase subunit I (181 aa).

2 consecutive 4Fe-4S ferredoxin-type domains span residues 51-80 (TRNS…LKKS) and 90-119 (KSFQ…LTPD). 8 residues coordinate [4Fe-4S] cluster: Cys-60, Cys-63, Cys-66, Cys-70, Cys-99, Cys-102, Cys-105, and Cys-109.

It belongs to the complex I 23 kDa subunit family. NDH-1 is composed of 13 different subunits. Subunits NuoA, H, J, K, L, M, N constitute the membrane sector of the complex. The cofactor is [4Fe-4S] cluster.

Its subcellular location is the cell membrane. It catalyses the reaction a quinone + NADH + 5 H(+)(in) = a quinol + NAD(+) + 4 H(+)(out). NDH-1 shuttles electrons from NADH, via FMN and iron-sulfur (Fe-S) centers, to quinones in the respiratory chain. The immediate electron acceptor for the enzyme in this species is believed to be ubiquinone. Couples the redox reaction to proton translocation (for every two electrons transferred, four hydrogen ions are translocated across the cytoplasmic membrane), and thus conserves the redox energy in a proton gradient. The chain is NADH-quinone oxidoreductase subunit I from Buchnera aphidicola subsp. Cinara cedri (strain Cc).